Here is a 53-residue protein sequence, read N- to C-terminus: UPF0391 membrane protein YPTS_0599 (53 aa).

The next 2 membrane-spanning stretches (helical) occupy residues 4–24 (WGII…GGLA) and 27–47 (AAWA…ISLF).

It belongs to the UPF0391 family.

It localises to the cell membrane. The polypeptide is UPF0391 membrane protein YPTS_0599 (Yersinia pseudotuberculosis serotype IB (strain PB1/+)).